Reading from the N-terminus, the 57-residue chain is uncharacterized protein (57 aa).

The tract at residues 1 to 57 (MPHYVVVKSPMRRRRSPRRRSPRVCYSPRRVACSPRRRSPRRRSPRRRSPRRSIVVY) is disordered. Basic residues predominate over residues 10-22 (PMRRRRSPRRRSP). The segment covering 23 to 34 (RVCYSPRRVACS) has biased composition (low complexity). Residues 35–51 (PRRRSPRRRSPRRRSPR) show a composition bias toward basic residues.

This is an uncharacterized protein from Acheta domesticus (House cricket).